We begin with the raw amino-acid sequence, 568 residues long: COMPASS component cclA (568 aa).

Residues 1–113 (MASDSGTPPP…MRYKLAPPKP (113 aa)) form a disordered region. Basic and acidic residues-rich tracts occupy residues 68-77 (KESLKKRESK) and 89-98 (PDPKHREPKQ). The B30.2/SPRY domain maps to 160–353 (ADPGFPSSLY…IPIRFKQHIY (194 aa)).

The protein belongs to the cclA family. As to quaternary structure, component of the COMPASS complex.

Its subcellular location is the nucleus. It is found in the chromosome. It localises to the telomere. Functionally, component of the COMPASS (Set1C) complex that specifically mono-, di- and trimethylates histone H3 to form H3K4me1/2/3, which subsequently plays a role in telomere length maintenance and transcription elongation regulation. Controls the production of several secondary metabolites, including colletochlorins, higginsianins and sclerosporide. Plays a key role in mycelial growth, sporulation, spore germination and virulence. The sequence is that of COMPASS component cclA from Colletotrichum higginsianum (strain IMI 349063) (Crucifer anthracnose fungus).